Here is a 427-residue protein sequence, read N- to C-terminus: Bifunctional enzyme MtnB/MtnX (427 aa).

An HK-MTPenyl-1-P phosphatase region spans residues 1 to 221 (MRKPLIICDF…LEETAEVKEW (221 aa)). An MTRu-1-P dehydratase region spans residues 222–427 (MSEQKRQELA…KLKALQAYHV (206 aa)). Positions 317 and 319 each coordinate Zn(2+).

The protein in the N-terminal section; belongs to the HAD-like hydrolase superfamily. MtnX family. It in the C-terminal section; belongs to the aldolase class II family. MtnB subfamily. Homotetramer. Requires Zn(2+) as cofactor.

It catalyses the reaction 5-(methylsulfanyl)-D-ribulose 1-phosphate = 5-methylsulfanyl-2,3-dioxopentyl phosphate + H2O. The catalysed reaction is 2-hydroxy-5-methylsulfanyl-3-oxopent-1-enyl phosphate + H2O = 1,2-dihydroxy-5-(methylsulfanyl)pent-1-en-3-one + phosphate. It participates in amino-acid biosynthesis; L-methionine biosynthesis via salvage pathway; L-methionine from S-methyl-5-thio-alpha-D-ribose 1-phosphate: step 2/6. Its pathway is amino-acid biosynthesis; L-methionine biosynthesis via salvage pathway; L-methionine from S-methyl-5-thio-alpha-D-ribose 1-phosphate: step 4/6. Functionally, catalyzes the dehydration of methylthioribulose-1-phosphate (MTRu-1-P) into 2,3-diketo-5-methylthiopentyl-1-phosphate (DK-MTP-1-P). In terms of biological role, dephosphorylates 2-hydroxy-3-keto-5-methylthiopentenyl-1-phosphate (HK-MTPenyl-1-P) yielding 1,2-dihydroxy-3-keto-5-methylthiopentene (DHK-MTPene). The chain is Bifunctional enzyme MtnB/MtnX (mtnB/mtnX) from Bacillus licheniformis (strain ATCC 14580 / DSM 13 / JCM 2505 / CCUG 7422 / NBRC 12200 / NCIMB 9375 / NCTC 10341 / NRRL NRS-1264 / Gibson 46).